A 458-amino-acid polypeptide reads, in one-letter code: Chromosomal replication initiator protein DnaA (458 aa).

A domain I, interacts with DnaA modulators region spans residues 1 to 84; sequence MENIWLEAQT…FHVAEEKPEA (84 aa). Residues 80–119 are compositionally biased toward basic and acidic residues; the sequence is EKPEAAHEAKPEKEAKPAREKERDKDKEKEKDREKEKKEL. Residues 80–120 are disordered; it reads EKPEAAHEAKPEKEAKPAREKERDKDKEKEKDREKEKKELV. The domain II stretch occupies residues 84 to 121; that stretch reads AAHEAKPEKEAKPAREKERDKDKEKEKDREKEKKELVP. The segment at 122 to 338 is domain III, AAA+ region; it reads NLNPKYTFES…GMLIRLEAFA (217 aa). Residues glycine 166, glycine 168, lysine 169, and threonine 170 each contribute to the ATP site. Residues 339–458 are domain IV, binds dsDNA; it reads SLTGQEITLS…VEDIRKKLFT (120 aa).

The protein belongs to the DnaA family. Oligomerizes as a right-handed, spiral filament on DNA at oriC.

Its subcellular location is the cytoplasm. Plays an essential role in the initiation and regulation of chromosomal replication. ATP-DnaA binds to the origin of replication (oriC) to initiate formation of the DNA replication initiation complex once per cell cycle. Binds the DnaA box (a 9 base pair repeat at the origin) and separates the double-stranded (ds)DNA. Forms a right-handed helical filament on oriC DNA; dsDNA binds to the exterior of the filament while single-stranded (ss)DNA is stabiized in the filament's interior. The ATP-DnaA-oriC complex binds and stabilizes one strand of the AT-rich DNA unwinding element (DUE), permitting loading of DNA polymerase. After initiation quickly degrades to an ADP-DnaA complex that is not apt for DNA replication. Binds acidic phospholipids. This is Chromosomal replication initiator protein DnaA from Citrifermentans bemidjiense (strain ATCC BAA-1014 / DSM 16622 / JCM 12645 / Bem) (Geobacter bemidjiensis).